Consider the following 602-residue polypeptide: Chaperone protein dnaK (602 aa).

This sequence belongs to the heat shock protein 70 family.

Its subcellular location is the plastid. The protein localises to the chloroplast. Acts as a chaperone. The polypeptide is Chaperone protein dnaK (Thalassiosira pseudonana (Marine diatom)).